The primary structure comprises 186 residues: MIEASKLRAGMTFVTNDGKLLKVLEASHHKPGKGNTIMRMKLRDVRSGSTFDTSYRPEEKFEQAIIETVPAQYLYQMDDTAYFMNTETYDQYEIPVVNVQEELKFILENSDVKIQFYGTEVIGVQVPTTVELTVTETQPSIKGATVTGSGKPATLETGLVVNVPDFIEAGQKLVINTVEGTYVSRA.

Belongs to the elongation factor P family.

The protein resides in the cytoplasm. Its pathway is protein biosynthesis; polypeptide chain elongation. Functionally, involved in peptide bond synthesis. Stimulates efficient translation and peptide-bond synthesis on native or reconstituted 70S ribosomes in vitro. Probably functions indirectly by altering the affinity of the ribosome for aminoacyl-tRNA, thus increasing their reactivity as acceptors for peptidyl transferase. The polypeptide is Elongation factor P (Streptococcus thermophilus (strain CNRZ 1066)).